The primary structure comprises 322 residues: Cytochrome c biogenesis protein CcsA (322 aa).

7 consecutive transmembrane segments (helical) span residues 9–29 (IFTH…LITL), 44–64 (GMIV…IYSG), 71–91 (LYES…VPYF), 143–163 (MILS…LLVI), 226–246 (VISL…VWAN), 255–275 (WDPK…YLHI), and 287–307 (AIVA…VNLL).

Belongs to the CcmF/CycK/Ccl1/NrfE/CcsA family. As to quaternary structure, may interact with Ccs1.

The protein resides in the plastid. It is found in the chloroplast thylakoid membrane. Required during biogenesis of c-type cytochromes (cytochrome c6 and cytochrome f) at the step of heme attachment. The sequence is that of Cytochrome c biogenesis protein CcsA from Lactuca sativa (Garden lettuce).